The primary structure comprises 469 residues: Uronate isomerase (469 aa).

This sequence belongs to the metallo-dependent hydrolases superfamily. Uronate isomerase family.

It carries out the reaction D-glucuronate = D-fructuronate. The catalysed reaction is aldehydo-D-galacturonate = keto-D-tagaturonate. It functions in the pathway carbohydrate metabolism; pentose and glucuronate interconversion. The protein is Uronate isomerase of Pectobacterium atrosepticum (strain SCRI 1043 / ATCC BAA-672) (Erwinia carotovora subsp. atroseptica).